The chain runs to 319 residues: Very-long-chain 3-oxoacyl-CoA reductase-A (319 aa).

A helical transmembrane segment spans residues 17 to 37 (LFWVGALITASLALYVVYKTI). 56–85 (GKWAVVTGATDGIGKSYAEELARRGFSMML) is a binding site for NADP(+). The next 2 helical transmembrane spans lie at 188-208 (GVIL…LTIY) and 282-302 (AVMG…NLGL). Residue S195 participates in substrate binding. Y208 serves as the catalytic Proton acceptor.

Belongs to the short-chain dehydrogenases/reductases (SDR) family. 17-beta-HSD 3 subfamily.

It localises to the endoplasmic reticulum membrane. The catalysed reaction is a very-long-chain (3R)-3-hydroxyacyl-CoA + NADP(+) = a very-long-chain 3-oxoacyl-CoA + NADPH + H(+). The enzyme catalyses 17beta-estradiol + NAD(+) = estrone + NADH + H(+). It catalyses the reaction 17beta-estradiol + NADP(+) = estrone + NADPH + H(+). It participates in lipid metabolism; fatty acid biosynthesis. It functions in the pathway steroid biosynthesis; estrogen biosynthesis. In terms of biological role, catalyzes the second of the four reactions of the long-chain fatty acids elongation cycle. This endoplasmic reticulum-bound enzymatic process, allows the addition of two carbons to the chain of long- and very long-chain fatty acids/VLCFAs per cycle. This enzyme has a 3-ketoacyl-CoA reductase activity, reducing 3-ketoacyl-CoA to 3-hydroxyacyl-CoA, within each cycle of fatty acid elongation. Thereby, it may participate in the production of VLCFAs of different chain lengths that are involved in multiple biological processes as precursors of membrane lipids and lipid mediators. May also catalyze the transformation of estrone (E1) into estradiol (E2) and play a role in estrogen formation. This is Very-long-chain 3-oxoacyl-CoA reductase-A (hsd17b12a) from Danio rerio (Zebrafish).